A 330-amino-acid polypeptide reads, in one-letter code: Polyprenal reductase (330 aa).

Over 1-16 (MAGWAGAELSVLNPLR) the chain is Cytoplasmic. A helical membrane pass occupies residues 17–37 (ALWLLLAAAFLLALLLQLAPA). The Lumenal segment spans residues 38-89 (RLLPSCALFQDLIRYGKTKQSGSRRPAVCRAFDVPKRYFSHFYVVSVLWNGS). The helical transmembrane segment at 90 to 110 (LLWFLSQSLFLGAPFPSWLWA) threads the bilayer. Topologically, residues 111-136 (LLRTLGVTQFQALGMESKASRIQGKK) are cytoplasmic. The chain crosses the membrane as a helical span at residues 137 to 157 (LALSTFLVLVFLWVHSLRRLF). The Lumenal portion of the chain corresponds to 158–169 (ECFYVSVFSNTA). Residues 170–190 (IHVVQYCFGLVYYVLVGLTVL) form a helical membrane-spanning segment. The Cytoplasmic segment spans residues 191 to 206 (SQVPMNDKNVYALGKN). The helical transmembrane segment at 207 to 227 (LLLQARWFHILGMMMFFWSSA) threads the bilayer. Residues 228 to 277 (HQYKCHVILSNLRRNKKGVVIHCQHRIPFGDWFEYVSSANYLAELMIYIS) are Lumenal-facing. Residues 278–298 (MAVTFGLHNVTWWLVVTYVFF) traverse the membrane as a helical segment. The Cytoplasmic segment spans residues 299–330 (SQALSAFFNHRFYKSTFVSYPKHRKAFLPFLF).

Belongs to the steroid 5-alpha reductase family. Polyprenal reductase subfamily. Expressed in the 2 tissues tested i.e. testis and liver.

The protein resides in the endoplasmic reticulum membrane. It catalyses the reaction a di-trans,poly-cis-dolichal + NADP(+) = a di-trans,poly-cis-polyprenal + NADPH + H(+). The enzyme catalyses a 3-oxo-5alpha-steroid + NADP(+) = a 3-oxo-Delta(4)-steroid + NADPH + H(+). The catalysed reaction is androst-4-ene-3,17-dione + NADPH + H(+) = 5alpha-androstan-3,17-dione + NADP(+). It carries out the reaction 17beta-hydroxy-5alpha-androstan-3-one + NADP(+) = testosterone + NADPH + H(+). It functions in the pathway protein modification; protein glycosylation. In terms of biological role, plays a key role in early steps of protein N-linked glycosylation by being involved in the conversion of polyprenol into dolichol. Acts as a polyprenal reductase that mediates the reduction of polyprenal into dolichal in a NADP-dependent mechanism. Dolichols are required for the synthesis of dolichol-linked monosaccharides and the oligosaccharide precursor used for N-glycosylation. Also able to convert testosterone (T) into 5-alpha-dihydrotestosterone (DHT). This chain is Polyprenal reductase, found in Rattus norvegicus (Rat).